A 54-amino-acid chain; its full sequence is Rubredoxin (54 aa).

The 54-residue stretch at 1-54 folds into the Rubredoxin-like domain; the sequence is MKKYVCVVCGYIYDPAEGDPDNGVNPGTSFEDIPDDWVCPLCGVGKDQFEPSEE. Positions 6, 9, 39, and 42 each coordinate Fe cation.

Belongs to the rubredoxin family. Requires Fe(3+) as cofactor.

Its function is as follows. Rubredoxin is a small nonheme, iron protein lacking acid-labile sulfide. Its single Fe, chelated to 4 Cys, functions as an electron acceptor and may also stabilize the conformation of the molecule. Functions as an intermediate component in the electron transfer chain: NADH-&gt;NROR-&gt;Rd-&gt;FprA1/2 in which Rd serves as the proximal electron donor to the FDPs that exhibit H(2)O-forming NADH oxidase activity. Also functions as the proximal electron donor to the Dfx and revRbr proteins that display superoxide reductase (SOR) and NADH peroxidase activity, respectively. Therefore, is a key electron carrier in an efficient multienzyme complex that can scavenge O(2) and reactive oxygen species (ROS), and thus plays an important role in the oxidative stress defense system in C.acetobutylicum, an obligate anaerobic bacterium. This chain is Rubredoxin (rd), found in Clostridium acetobutylicum (strain ATCC 824 / DSM 792 / JCM 1419 / IAM 19013 / LMG 5710 / NBRC 13948 / NRRL B-527 / VKM B-1787 / 2291 / W).